We begin with the raw amino-acid sequence, 540 residues long: Cobalt-factor III methyltransferase (540 aa).

The [4Fe-4S] cluster site is built by C402, C405, C439, and C443.

The protein in the N-terminal section; belongs to the precorrin methyltransferase family. It depends on [4Fe-4S] cluster as a cofactor.

The enzyme catalyses Co(II)-factor III + AH2 + S-adenosyl-L-methionine = Co-precorrin-4 + A + S-adenosyl-L-homocysteine. The protein operates within cofactor biosynthesis; adenosylcobalamin biosynthesis. In terms of biological role, methyltransferase that catalyzes the reduction, ring contraction and methylation of C-17 in cobalt-factor III to form cobalt-precorrin-4. Is also able to convert cobalt-precorrin-3 to cobalt-precorrin-4. This Priestia megaterium (Bacillus megaterium) protein is Cobalt-factor III methyltransferase (cbiH60).